Reading from the N-terminus, the 171-residue chain is Co-chaperone protein HscB (171 aa).

The 73-residue stretch at 2-74 (DYFTLFGLPA…LTRAEYLLSL (73 aa)) folds into the J domain.

The protein belongs to the HscB family. In terms of assembly, interacts with HscA and stimulates its ATPase activity. Interacts with IscU.

Functionally, co-chaperone involved in the maturation of iron-sulfur cluster-containing proteins. Seems to help targeting proteins to be folded toward HscA. The polypeptide is Co-chaperone protein HscB (Salmonella choleraesuis (strain SC-B67)).